A 403-amino-acid chain; its full sequence is Argininosuccinate synthase (403 aa).

Residues 12-20 (AYSGGLDTS) and alanine 39 each bind ATP. Positions 91 and 96 each coordinate L-citrulline. Glycine 121 lines the ATP pocket. Positions 123, 127, and 128 each coordinate L-aspartate. An L-citrulline-binding site is contributed by asparagine 127. Positions 131, 180, 189, 265, and 277 each coordinate L-citrulline.

Belongs to the argininosuccinate synthase family. Type 1 subfamily. As to quaternary structure, homotetramer.

The protein resides in the cytoplasm. It catalyses the reaction L-citrulline + L-aspartate + ATP = 2-(N(omega)-L-arginino)succinate + AMP + diphosphate + H(+). It functions in the pathway amino-acid biosynthesis; L-arginine biosynthesis; L-arginine from L-ornithine and carbamoyl phosphate: step 2/3. The chain is Argininosuccinate synthase from Vibrio vulnificus (strain CMCP6).